A 604-amino-acid chain; its full sequence is Aspartate--tRNA(Asp/Asn) ligase (604 aa).

Glu-187 is a binding site for L-aspartate. The aspartate stretch occupies residues 211–214; the sequence is QQFK. Residues Arg-233 and His-461 each coordinate L-aspartate. 233–235 is an ATP binding site; it reads RDE. Position 495 (Glu-495) interacts with ATP. Arg-502 is a binding site for L-aspartate. 547-550 provides a ligand contact to ATP; the sequence is GLDR.

It belongs to the class-II aminoacyl-tRNA synthetase family. Type 1 subfamily. In terms of assembly, homodimer.

The protein localises to the cytoplasm. It catalyses the reaction tRNA(Asx) + L-aspartate + ATP = L-aspartyl-tRNA(Asx) + AMP + diphosphate. Functionally, aspartyl-tRNA synthetase with relaxed tRNA specificity since it is able to aspartylate not only its cognate tRNA(Asp) but also tRNA(Asn). Reaction proceeds in two steps: L-aspartate is first activated by ATP to form Asp-AMP and then transferred to the acceptor end of tRNA(Asp/Asn). In Chlorobium luteolum (strain DSM 273 / BCRC 81028 / 2530) (Pelodictyon luteolum), this protein is Aspartate--tRNA(Asp/Asn) ligase.